Consider the following 87-residue polypeptide: Small ribosomal subunit protein bS20 (87 aa).

The interval 1-29 is disordered; that stretch reads MANTAQARKRARQAVKQNAHNSSQRSTLR. The segment covering 20–29 has biased composition (polar residues); that stretch reads HNSSQRSTLR.

Belongs to the bacterial ribosomal protein bS20 family.

Functionally, binds directly to 16S ribosomal RNA. This chain is Small ribosomal subunit protein bS20, found in Herminiimonas arsenicoxydans.